Consider the following 1416-residue polypeptide: DNA-directed RNA polymerase subunit beta' (1416 aa).

Residues Cys-71, Cys-73, Cys-86, and Cys-89 each contribute to the Zn(2+) site. Mg(2+)-binding residues include Asp-461, Asp-463, and Asp-465. Zn(2+)-binding residues include Cys-815, Cys-889, Cys-896, and Cys-899.

This sequence belongs to the RNA polymerase beta' chain family. As to quaternary structure, the RNAP catalytic core consists of 2 alpha, 1 beta, 1 beta' and 1 omega subunit. When a sigma factor is associated with the core the holoenzyme is formed, which can initiate transcription. Mg(2+) serves as cofactor. The cofactor is Zn(2+).

It catalyses the reaction RNA(n) + a ribonucleoside 5'-triphosphate = RNA(n+1) + diphosphate. Its function is as follows. DNA-dependent RNA polymerase catalyzes the transcription of DNA into RNA using the four ribonucleoside triphosphates as substrates. The polypeptide is DNA-directed RNA polymerase subunit beta' (Haemophilus influenzae (strain 86-028NP)).